The sequence spans 444 residues: Exodeoxyribonuclease 7 large subunit (444 aa).

Belongs to the XseA family. Heterooligomer composed of large and small subunits.

The protein resides in the cytoplasm. It carries out the reaction Exonucleolytic cleavage in either 5'- to 3'- or 3'- to 5'-direction to yield nucleoside 5'-phosphates.. In terms of biological role, bidirectionally degrades single-stranded DNA into large acid-insoluble oligonucleotides, which are then degraded further into small acid-soluble oligonucleotides. This chain is Exodeoxyribonuclease 7 large subunit, found in Xylella fastidiosa (strain M23).